The sequence spans 244 residues: 6-carboxyhexanoate--CoA ligase (244 aa).

This sequence belongs to the BioW family. In terms of assembly, homodimer. Mg(2+) serves as cofactor.

It carries out the reaction heptanedioate + ATP + CoA = 6-carboxyhexanoyl-CoA + AMP + diphosphate. Its pathway is metabolic intermediate metabolism; pimeloyl-CoA biosynthesis; pimeloyl-CoA from pimelate: step 1/1. In terms of biological role, catalyzes the transformation of pimelate into pimeloyl-CoA with concomitant hydrolysis of ATP to AMP. This Hydrogenobacter thermophilus (strain DSM 6534 / IAM 12695 / TK-6) protein is 6-carboxyhexanoate--CoA ligase.